We begin with the raw amino-acid sequence, 96 residues long: Large ribosomal subunit protein bL25 (96 aa).

This sequence belongs to the bacterial ribosomal protein bL25 family. As to quaternary structure, part of the 50S ribosomal subunit; part of the 5S rRNA/L5/L18/L25 subcomplex. Contacts the 5S rRNA. Binds to the 5S rRNA independently of L5 and L18.

Its function is as follows. This is one of the proteins that binds to the 5S RNA in the ribosome where it forms part of the central protuberance. This Buchnera aphidicola subsp. Schizaphis graminum (strain Sg) protein is Large ribosomal subunit protein bL25.